We begin with the raw amino-acid sequence, 468 residues long: MRDFMDYIQLAFYDASKWNRDNSYSQLTTTANALLDFSTPERLKVNLSSLSTPHFATTYTLGTVGLIDGSISYLFTTIPLHDTPSRSTLIPLRKLVPGYRQIYPPSLPPAFPAADGRDGDLAIGGTEGDLKKKATLLHATLHLPPPTTLTGSFLRRLSPTTQLSLAFCSSRAPASKSAPQATLVTQILYDTGKYNSEFLFSTDNALFGFKGLWNFGPDPRKQNQNGGDPAREPCRSLLSLLSAGGEVYYSPVSSVVGLSTGLRFTTLPAATENPHSTFPYTLTLTLTPLTGSMSTTYSLLASPNLAFSSRFGFNVYSWESEMVAGCELWRRSKKLHTLQRNSSPLFAVDDLTWARRKMGLQDAAVSVHSERDDLPGIQRYDHDMHHHTQRPHASDSVIKVRVDQSWNIRALWEGRVKELVVSAGIALGPKSRSSLSYASSLAASGPGAAGGLSSYGWKSVGVSVLYSS.

It belongs to the MDM10 family. In terms of assembly, component of the ER-mitochondria encounter structure (ERMES) or MDM complex, composed of MMM1, MDM10, MDM12 and MDM34. Associates with the mitochondrial outer membrane sorting assembly machinery SAM(core) complex.

It localises to the mitochondrion outer membrane. Its function is as follows. Component of the ERMES/MDM complex, which serves as a molecular tether to connect the endoplasmic reticulum and mitochondria. Components of this complex are involved in the control of mitochondrial shape and protein biogenesis and may function in phospholipid exchange. MDM10 is involved in the late assembly steps of the general translocase of the mitochondrial outer membrane (TOM complex). Functions in the TOM40-specific route of the assembly of outer membrane beta-barrel proteins, including the association of TOM40 with the receptor TOM22 and small TOM proteins. Can associate with the SAM(core) complex as well as the MDM12-MMM1 complex, both involved in late steps of the major beta-barrel assembly pathway, that is responsible for biogenesis of all outer membrane beta-barrel proteins. May act as a switch that shuttles between both complexes and channels precursor proteins into the TOM40-specific pathway. Plays a role in mitochondrial morphology and in the inheritance of mitochondria. The sequence is that of Mitochondrial distribution and morphology protein 10 from Blastomyces gilchristii (strain SLH14081) (Blastomyces dermatitidis).